Reading from the N-terminus, the 63-residue chain is Large ribosomal subunit protein uL29 (63 aa).

It belongs to the universal ribosomal protein uL29 family.

This Christiangramia forsetii (strain DSM 17595 / CGMCC 1.15422 / KT0803) (Gramella forsetii) protein is Large ribosomal subunit protein uL29.